A 477-amino-acid polypeptide reads, in one-letter code: Glycogen synthase (477 aa).

K15 contributes to the ADP-alpha-D-glucose binding site.

It belongs to the glycosyltransferase 1 family. Bacterial/plant glycogen synthase subfamily.

It carries out the reaction [(1-&gt;4)-alpha-D-glucosyl](n) + ADP-alpha-D-glucose = [(1-&gt;4)-alpha-D-glucosyl](n+1) + ADP + H(+). Its pathway is glycan biosynthesis; glycogen biosynthesis. Its function is as follows. Synthesizes alpha-1,4-glucan chains using ADP-glucose. The sequence is that of Glycogen synthase from Streptococcus pneumoniae (strain Hungary19A-6).